Here is a 122-residue protein sequence, read N- to C-terminus: MAEEIEVEETEDFHDMDFNDEEPSCSGGAVQARTERFVVKKWVAHAMWGWDVAVDNCAICRNHIMNLCIECQADPNANQDECTVAWGECNHAFHYHCIARWLKTRLVCPLDNKEWVYQKYGR.

The segment covering 1–23 (MAEEIEVEETEDFHDMDFNDEEP) has biased composition (acidic residues). The disordered stretch occupies residues 1–28 (MAEEIEVEETEDFHDMDFNDEEPSCSGG). 11 residues coordinate Zn(2+): C57, C60, C68, C71, C82, C89, H91, H94, H96, C108, and D111. The RING-type zinc finger occupies 57 to 112 (CAICRNHIMNLCIECQADPNANQDECTVAWGECNHAFHYHCIARWLKTRLVCPLDN).

The protein belongs to the RING-box family. Part of a SCF complex consisting of Skpa (SKP1), Cul1, Roc1B and a F-box protein. Highly expressed in early embryos, and in pupae. Widely expressed in adult males, while it is weakly expressed in adult females.

Its subcellular location is the cytoplasm. It localises to the nucleus. It functions in the pathway protein modification; protein ubiquitination. In terms of biological role, component of the SCF (SKP1-CUL1-F-box protein) E3 ubiquitin ligase complex, which mediates the ubiquitination and subsequent proteasomal degradation of target proteins. Through the RING-type zinc finger, seems to recruit the E2 ubiquitination enzyme to the complex and brings it into close proximity to the substrate. The polypeptide is RING-box protein 1B (Roc1b) (Drosophila melanogaster (Fruit fly)).